A 312-amino-acid chain; its full sequence is Porphobilinogen deaminase (312 aa).

The residue at position 241 (Cys241) is an S-(dipyrrolylmethanemethyl)cysteine.

It belongs to the HMBS family. Monomer. Dipyrromethane is required as a cofactor.

The catalysed reaction is 4 porphobilinogen + H2O = hydroxymethylbilane + 4 NH4(+). Its pathway is porphyrin-containing compound metabolism; protoporphyrin-IX biosynthesis; coproporphyrinogen-III from 5-aminolevulinate: step 2/4. It participates in porphyrin-containing compound metabolism; chlorophyll biosynthesis. Functionally, tetrapolymerization of the monopyrrole PBG into the hydroxymethylbilane pre-uroporphyrinogen in several discrete steps. The protein is Porphobilinogen deaminase (hemC) of Chlorobaculum parvum (strain DSM 263 / NCIMB 8327) (Chlorobium vibrioforme subsp. thiosulfatophilum).